Consider the following 620-residue polypeptide: 1-deoxy-D-xylulose-5-phosphate synthase (620 aa).

Thiamine diphosphate contacts are provided by residues histidine 80 and 121-123 (GHS). Residue aspartate 152 coordinates Mg(2+). Residues 153–154 (GA), asparagine 181, tyrosine 288, and glutamate 370 contribute to the thiamine diphosphate site. A Mg(2+)-binding site is contributed by asparagine 181.

Belongs to the transketolase family. DXPS subfamily. As to quaternary structure, homodimer. Mg(2+) is required as a cofactor. The cofactor is thiamine diphosphate.

The enzyme catalyses D-glyceraldehyde 3-phosphate + pyruvate + H(+) = 1-deoxy-D-xylulose 5-phosphate + CO2. It participates in metabolic intermediate biosynthesis; 1-deoxy-D-xylulose 5-phosphate biosynthesis; 1-deoxy-D-xylulose 5-phosphate from D-glyceraldehyde 3-phosphate and pyruvate: step 1/1. Functionally, catalyzes the acyloin condensation reaction between C atoms 2 and 3 of pyruvate and glyceraldehyde 3-phosphate to yield 1-deoxy-D-xylulose-5-phosphate (DXP). This is 1-deoxy-D-xylulose-5-phosphate synthase from Shigella sonnei (strain Ss046).